The following is a 493-amino-acid chain: Glutamate--tRNA ligase (493 aa).

The 'HIGH' region motif lies at 10-20 (PSPTGDPHVGT). The Zn(2+) site is built by cysteine 107, cysteine 109, cysteine 134, and histidine 136. A 'KMSKS' region motif is present at residues 251–255 (KLSKR). Lysine 254 contributes to the ATP binding site.

The protein belongs to the class-I aminoacyl-tRNA synthetase family. Glutamate--tRNA ligase type 1 subfamily. Monomer. The cofactor is Zn(2+).

The protein localises to the cytoplasm. It catalyses the reaction tRNA(Glu) + L-glutamate + ATP = L-glutamyl-tRNA(Glu) + AMP + diphosphate. In terms of biological role, catalyzes the attachment of glutamate to tRNA(Glu) in a two-step reaction: glutamate is first activated by ATP to form Glu-AMP and then transferred to the acceptor end of tRNA(Glu). The protein is Glutamate--tRNA ligase of Ectopseudomonas mendocina (strain ymp) (Pseudomonas mendocina).